Reading from the N-terminus, the 94-residue chain is Large ribosomal subunit protein uL23 (94 aa).

It belongs to the universal ribosomal protein uL23 family. As to quaternary structure, part of the 50S ribosomal subunit. Contacts protein L29, and trigger factor when it is bound to the ribosome.

One of the early assembly proteins it binds 23S rRNA. One of the proteins that surrounds the polypeptide exit tunnel on the outside of the ribosome. Forms the main docking site for trigger factor binding to the ribosome. This is Large ribosomal subunit protein uL23 from Latilactobacillus sakei subsp. sakei (strain 23K) (Lactobacillus sakei subsp. sakei).